The sequence spans 170 residues: Double homeobox protein 1 (170 aa).

2 DNA-binding regions (homeobox) span residues 19-78 (GRRM…LRQH) and 94-153 (GRRK…RGQS). A disordered region spans residues 75–100 (LRQHRRQSRPWPGRRDPQKGRRKRTA).

The protein belongs to the paired homeobox family. As to expression, expressed in rhabdomyosarcoma TE671 cells as well as in several other normal and cancer cells.

The protein localises to the nucleus. Functionally, probable transcription activator. Binds the P5 DNA element sequence 5'-GATCTGAGTCTAATTGAGAATTACTGTAC-3'. This chain is Double homeobox protein 1 (DUX1), found in Homo sapiens (Human).